A 367-amino-acid polypeptide reads, in one-letter code: tRNA/tmRNA (uracil-C(5))-methyltransferase (367 aa).

Positions 189, 217, 222, 238, and 298 each coordinate S-adenosyl-L-methionine. Cysteine 323 serves as the catalytic Nucleophile. Glutamate 357 (proton acceptor) is an active-site residue.

The protein belongs to the class I-like SAM-binding methyltransferase superfamily. RNA M5U methyltransferase family. TrmA subfamily.

It carries out the reaction uridine(54) in tRNA + S-adenosyl-L-methionine = 5-methyluridine(54) in tRNA + S-adenosyl-L-homocysteine + H(+). The enzyme catalyses uridine(341) in tmRNA + S-adenosyl-L-methionine = 5-methyluridine(341) in tmRNA + S-adenosyl-L-homocysteine + H(+). Its function is as follows. Dual-specificity methyltransferase that catalyzes the formation of 5-methyluridine at position 54 (m5U54) in all tRNAs, and that of position 341 (m5U341) in tmRNA (transfer-mRNA). The protein is tRNA/tmRNA (uracil-C(5))-methyltransferase of Pseudoalteromonas translucida (strain TAC 125).